We begin with the raw amino-acid sequence, 318 residues long: Deoxyribose-phosphate aldolase (318 aa).

Asp155 functions as the Proton donor/acceptor in the catalytic mechanism. Lys218 serves as the catalytic Schiff-base intermediate with acetaldehyde. Lys254 (proton donor/acceptor) is an active-site residue.

The protein belongs to the DeoC/FbaB aldolase family. DeoC type 2 subfamily. In terms of assembly, interacts with YBX1. In terms of tissue distribution, mainly expressed in liver, lung and colon.

The protein resides in the cytoplasm. It localises to the cytoplasmic granule. Its subcellular location is the nucleus. The enzyme catalyses 2-deoxy-D-ribose 5-phosphate = D-glyceraldehyde 3-phosphate + acetaldehyde. The protein operates within carbohydrate degradation; 2-deoxy-D-ribose 1-phosphate degradation; D-glyceraldehyde 3-phosphate and acetaldehyde from 2-deoxy-alpha-D-ribose 1-phosphate: step 2/2. Catalyzes a reversible aldol reaction between acetaldehyde and D-glyceraldehyde 3-phosphate to generate 2-deoxy-D-ribose 5-phosphate. Participates in stress granule (SG) assembly. May allow ATP production from extracellular deoxyinosine in conditions of energy deprivation. This chain is Deoxyribose-phosphate aldolase (DERA), found in Homo sapiens (Human).